We begin with the raw amino-acid sequence, 454 residues long: Bifunctional protein GlmU (454 aa).

Positions 1–232 are pyrophosphorylase; that stretch reads MTDRTCLSIV…VDNVIGINNR (232 aa). UDP-N-acetyl-alpha-D-glucosamine-binding positions include 11–14, Lys25, Gln78, and 83–84; these read LAAG and GT. Position 108 (Asp108) interacts with Mg(2+). UDP-N-acetyl-alpha-D-glucosamine-binding residues include Gly144, Glu158, Asn173, and Asn230. Asn230 contacts Mg(2+). The linker stretch occupies residues 233-253; the sequence is AELAEAETIWQNRKRRELMLS. Residues 254–454 are N-acetyltransferase; the sequence is GVTLIAPETV…AIKAAKSVSK (201 aa). 2 residues coordinate UDP-N-acetyl-alpha-D-glucosamine: Arg319 and Lys337. The active-site Proton acceptor is the His349. Positions 352 and 363 each coordinate UDP-N-acetyl-alpha-D-glucosamine. Residues Ala366, 372-373, Ser391, Ser409, and Arg426 contribute to the acetyl-CoA site; that span reads NY.

In the N-terminal section; belongs to the N-acetylglucosamine-1-phosphate uridyltransferase family. The protein in the C-terminal section; belongs to the transferase hexapeptide repeat family. Homotrimer. It depends on Mg(2+) as a cofactor.

Its subcellular location is the cytoplasm. The catalysed reaction is alpha-D-glucosamine 1-phosphate + acetyl-CoA = N-acetyl-alpha-D-glucosamine 1-phosphate + CoA + H(+). It catalyses the reaction N-acetyl-alpha-D-glucosamine 1-phosphate + UTP + H(+) = UDP-N-acetyl-alpha-D-glucosamine + diphosphate. It participates in nucleotide-sugar biosynthesis; UDP-N-acetyl-alpha-D-glucosamine biosynthesis; N-acetyl-alpha-D-glucosamine 1-phosphate from alpha-D-glucosamine 6-phosphate (route II): step 2/2. It functions in the pathway nucleotide-sugar biosynthesis; UDP-N-acetyl-alpha-D-glucosamine biosynthesis; UDP-N-acetyl-alpha-D-glucosamine from N-acetyl-alpha-D-glucosamine 1-phosphate: step 1/1. The protein operates within bacterial outer membrane biogenesis; LPS lipid A biosynthesis. In terms of biological role, catalyzes the last two sequential reactions in the de novo biosynthetic pathway for UDP-N-acetylglucosamine (UDP-GlcNAc). The C-terminal domain catalyzes the transfer of acetyl group from acetyl coenzyme A to glucosamine-1-phosphate (GlcN-1-P) to produce N-acetylglucosamine-1-phosphate (GlcNAc-1-P), which is converted into UDP-GlcNAc by the transfer of uridine 5-monophosphate (from uridine 5-triphosphate), a reaction catalyzed by the N-terminal domain. This chain is Bifunctional protein GlmU, found in Brucella melitensis biotype 1 (strain ATCC 23456 / CCUG 17765 / NCTC 10094 / 16M).